The sequence spans 32 residues: Photosystem II reaction center protein T (32 aa).

An N-formylmethionine modification is found at Met1. The Lumenal portion of the chain corresponds to 1–2 (ME). A helical membrane pass occupies residues 3-23 (TITYVFIFACIIALFFFAIFF). The Cytoplasmic portion of the chain corresponds to 24–32 (REPPRITKK).

The protein belongs to the PsbT family. PSII is composed of 1 copy each of membrane proteins PsbA, PsbB, PsbC, PsbD, PsbE, PsbF, PsbH, PsbI, PsbJ, PsbK, PsbL, PsbM, PsbT, PsbX, PsbY, PsbZ, Psb30/Ycf12, PsbO, CyanoQ (PsbQ), PsbU, PsbV and a large number of cofactors. It forms dimeric complexes. Part of a photosystem II (PSII) assembly intermediate complex PSII-I; crystallized from a strain deleted of psbJ, it forms monomeric PSII before addition of the oxygen evolving complex. PSII-I includes 3 assembly factors not found in mature PSII (Psb27, Psb28 and Psb34). Requires PSII binds multiple chlorophylls, carotenoids and specific lipids. as cofactor.

It is found in the cellular thylakoid membrane. Found at the monomer-monomer interface of the photosystem II (PS II) dimer, plays a role in assembly and dimerization of PSII. PSII is a light-driven water plastoquinone oxidoreductase, using light energy to abstract electrons from H(2)O, generating a proton gradient subsequently used for ATP formation. The protein is Photosystem II reaction center protein T of Thermosynechococcus vestitus (strain NIES-2133 / IAM M-273 / BP-1).